We begin with the raw amino-acid sequence, 1258 residues long: Non-secreted LysM effector LysM19 (1258 aa).

The disordered stretch occupies residues 148–168; that stretch reads VTQSLPNISSHEKRDDHEGNS. Positions 157 to 168 are enriched in basic and acidic residues; it reads SHEKRDDHEGNS. LysM domains follow at residues 1028 to 1073 and 1179 to 1227; these read IVYT…SICL and RWHV…AYCT.

The protein belongs to the secreted LysM effector family.

Non-secreted LysM effector that might be involved in manipulation of host defenses for successful infection. The sequence is that of Non-secreted LysM effector LysM19 from Penicillium expansum (Blue mold rot fungus).